The chain runs to 67 residues: UPF0434 protein RALTA_A0561 (67 aa).

Belongs to the UPF0434 family.

In Cupriavidus taiwanensis (strain DSM 17343 / BCRC 17206 / CCUG 44338 / CIP 107171 / LMG 19424 / R1) (Ralstonia taiwanensis (strain LMG 19424)), this protein is UPF0434 protein RALTA_A0561.